Consider the following 385-residue polypeptide: uncharacterized protein (385 aa).

9 helical membrane-spanning segments follow: residues 12–32, 50–70, 90–110, 132–152, 195–215, 233–253, 272–292, 312–332, and 335–355; these read GVAI…PKAA, WAFL…LLFG, LLVL…ILLA, FNTG…LGLI, LALG…GAAL, TGFV…ALQW, LSAP…WPQL, YLLQ…FMHF, and LELL…SVIW.

It to B.subtilis YxaH and YrkO.

It is found in the cell membrane. Involved in transport. This is an uncharacterized protein from Escherichia coli (strain K12).